Consider the following 163-residue polypeptide: MQPVLECEIFVENASGLELPELAIAPWENHLQRWLPELTAALPPADGYELTLRFTTDAEIHNLNHQYRHKDQPTDVLSFAALEDNFASPLPPGEPLYLGDIIVSVETAQRQAQERQHSLQTELGWLVSHGLLHLLGWDHPDEARLIEMLDRQAVLLRNVQLIP.

Positions 129, 133, and 139 each coordinate Zn(2+).

Belongs to the endoribonuclease YbeY family. Zn(2+) serves as cofactor.

The protein resides in the cytoplasm. Single strand-specific metallo-endoribonuclease involved in late-stage 70S ribosome quality control and in maturation of the 3' terminus of the 16S rRNA. In Picosynechococcus sp. (strain ATCC 27264 / PCC 7002 / PR-6) (Agmenellum quadruplicatum), this protein is Endoribonuclease YbeY.